A 443-amino-acid chain; its full sequence is Tubulin beta chain (443 aa).

8 residues coordinate GTP: Gln11, Glu69, Ser138, Gly142, Thr143, Gly144, Asn204, and Asn226. Mg(2+) is bound at residue Glu69. Positions 421 to 443 are disordered; sequence EYQQYQDASAEEEGEFGEEEEEN. A compositionally biased stretch (acidic residues) spans 429 to 443; it reads SAEEEGEFGEEEEEN.

It belongs to the tubulin family. As to quaternary structure, dimer of alpha and beta chains. A typical microtubule is a hollow water-filled tube with an outer diameter of 25 nm and an inner diameter of 15 nM. Alpha-beta heterodimers associate head-to-tail to form protofilaments running lengthwise along the microtubule wall with the beta-tubulin subunit facing the microtubule plus end conferring a structural polarity. Microtubules usually have 13 protofilaments but different protofilament numbers can be found in some organisms and specialized cells. Requires Mg(2+) as cofactor.

The protein localises to the cytoplasm. Its subcellular location is the cytoskeleton. Its function is as follows. Tubulin is the major constituent of microtubules, a cylinder consisting of laterally associated linear protofilaments composed of alpha- and beta-tubulin heterodimers. Microtubules grow by the addition of GTP-tubulin dimers to the microtubule end, where a stabilizing cap forms. Below the cap, tubulin dimers are in GDP-bound state, owing to GTPase activity of alpha-tubulin. The chain is Tubulin beta chain (TUBB1) from Polytomella agilis (Quadriflagellate alga).